Consider the following 369-residue polypeptide: Anhydro-N-acetylmuramic acid kinase (369 aa).

9 to 16 is an ATP binding site; sequence GTSLDAVD.

Belongs to the anhydro-N-acetylmuramic acid kinase family.

The enzyme catalyses 1,6-anhydro-N-acetyl-beta-muramate + ATP + H2O = N-acetyl-D-muramate 6-phosphate + ADP + H(+). It functions in the pathway amino-sugar metabolism; 1,6-anhydro-N-acetylmuramate degradation. The protein operates within cell wall biogenesis; peptidoglycan recycling. Catalyzes the specific phosphorylation of 1,6-anhydro-N-acetylmuramic acid (anhMurNAc) with the simultaneous cleavage of the 1,6-anhydro ring, generating MurNAc-6-P. Is required for the utilization of anhMurNAc either imported from the medium or derived from its own cell wall murein, and thus plays a role in cell wall recycling. This chain is Anhydro-N-acetylmuramic acid kinase, found in Phenylobacterium zucineum (strain HLK1).